The primary structure comprises 233 residues: tRNA (guanine-N(7)-)-methyltransferase (233 aa).

A disordered region spans residues 1–36 (MSEFDPNPPRRNFYGRRHGKTLRQSQKGYLSEDLGS). 4 residues coordinate S-adenosyl-L-methionine: Glu68, Glu93, Asp120, and Asp142. The active site involves Asp142. Substrate contacts are provided by residues Lys146, Asp178, and 211–214 (TRYE).

This sequence belongs to the class I-like SAM-binding methyltransferase superfamily. TrmB family.

The enzyme catalyses guanosine(46) in tRNA + S-adenosyl-L-methionine = N(7)-methylguanosine(46) in tRNA + S-adenosyl-L-homocysteine. It functions in the pathway tRNA modification; N(7)-methylguanine-tRNA biosynthesis. In terms of biological role, catalyzes the formation of N(7)-methylguanine at position 46 (m7G46) in tRNA. The chain is tRNA (guanine-N(7)-)-methyltransferase from Paracoccus denitrificans (strain Pd 1222).